We begin with the raw amino-acid sequence, 169 residues long: Small ribosomal subunit protein uS13m (169 aa).

The segment at 149–169 is disordered; it reads KKLQEKKNKEQKKSQKCKTKK. Basic and acidic residues predominate over residues 150–161; it reads KLQEKKNKEQKK.

This sequence belongs to the universal ribosomal protein uS13 family. Part of the small ribosomal subunit.

It localises to the mitochondrion. In terms of biological role, located at the top of the head of the small subunit, it contacts several helices of the small subunit rRNA. The polypeptide is Small ribosomal subunit protein uS13m (mrps13) (Dictyostelium discoideum (Social amoeba)).